Reading from the N-terminus, the 375-residue chain is tRNA-specific 2-thiouridylase MnmA (375 aa).

ATP contacts are provided by residues 18–25 (GMSGGVDS) and M44. The interval 104–106 (NPD) is interaction with target base in tRNA. C109 serves as the catalytic Nucleophile. A disulfide bridge connects residues C109 and C206. G134 lines the ATP pocket. Residues 156–158 (KDQ) are interaction with tRNA. C206 functions as the Cysteine persulfide intermediate in the catalytic mechanism. The tract at residues 318-319 (RY) is interaction with tRNA.

The protein belongs to the MnmA/TRMU family.

The protein resides in the cytoplasm. The catalysed reaction is S-sulfanyl-L-cysteinyl-[protein] + uridine(34) in tRNA + AH2 + ATP = 2-thiouridine(34) in tRNA + L-cysteinyl-[protein] + A + AMP + diphosphate + H(+). In terms of biological role, catalyzes the 2-thiolation of uridine at the wobble position (U34) of tRNA, leading to the formation of s(2)U34. The polypeptide is tRNA-specific 2-thiouridylase MnmA (Colwellia psychrerythraea (strain 34H / ATCC BAA-681) (Vibrio psychroerythus)).